Reading from the N-terminus, the 148-residue chain is Macrodomain Ter protein (148 aa).

The protein belongs to the MatP family. As to quaternary structure, homodimer.

The protein resides in the cytoplasm. Required for spatial organization of the terminus region of the chromosome (Ter macrodomain) during the cell cycle. Prevents early segregation of duplicated Ter macrodomains during cell division. Binds specifically to matS, which is a 13 bp signature motif repeated within the Ter macrodomain. The polypeptide is Macrodomain Ter protein (Haemophilus ducreyi (strain 35000HP / ATCC 700724)).